Here is a 284-residue protein sequence, read N- to C-terminus: Pantothenate synthetase (284 aa).

Residue 30–37 (MGNLHDGH) participates in ATP binding. H37 acts as the Proton donor in catalysis. Q61 is a binding site for (R)-pantoate. Q61 serves as a coordination point for beta-alanine. 149–152 (GEKD) contacts ATP. Q155 provides a ligand contact to (R)-pantoate. ATP contacts are provided by residues V178 and 186–189 (LSSR).

The protein belongs to the pantothenate synthetase family. In terms of assembly, homodimer.

Its subcellular location is the cytoplasm. The catalysed reaction is (R)-pantoate + beta-alanine + ATP = (R)-pantothenate + AMP + diphosphate + H(+). It participates in cofactor biosynthesis; (R)-pantothenate biosynthesis; (R)-pantothenate from (R)-pantoate and beta-alanine: step 1/1. Its function is as follows. Catalyzes the condensation of pantoate with beta-alanine in an ATP-dependent reaction via a pantoyl-adenylate intermediate. This Klebsiella pneumoniae (strain 342) protein is Pantothenate synthetase.